The sequence spans 344 residues: NADH-ubiquinone oxidoreductase chain 2 (344 aa).

Transmembrane regions (helical) follow at residues 1 to 21 (MNPL…TITL), 24 to 44 (FHWL…IPLM), 59 to 79 (YFLT…ISAW), 94 to 114 (MNIL…HFWI), 121 to 141 (ISLP…MALL), 150 to 170 (LNLT…GGIG), 177 to 197 (IMAF…KFDP), 201 to 221 (LLNF…LTTI), 245 to 265 (LILL…KLLI), 273 to 293 (NATL…FFYI), and 324 to 344 (TAIM…LLLL).

Belongs to the complex I subunit 2 family.

The protein resides in the mitochondrion inner membrane. It catalyses the reaction a ubiquinone + NADH + 5 H(+)(in) = a ubiquinol + NAD(+) + 4 H(+)(out). Functionally, core subunit of the mitochondrial membrane respiratory chain NADH dehydrogenase (Complex I) that is believed to belong to the minimal assembly required for catalysis. Complex I functions in the transfer of electrons from NADH to the respiratory chain. The immediate electron acceptor for the enzyme is believed to be ubiquinone. The chain is NADH-ubiquinone oxidoreductase chain 2 (MT-ND2) from Aquarana catesbeiana (American bullfrog).